A 140-amino-acid chain; its full sequence is Protein ApaG (140 aa).

Residues 13 to 137 form the ApaG domain; it reads EARTRDIVVR…FSLHLPGAAM (125 aa).

The chain is Protein ApaG from Caulobacter vibrioides (strain ATCC 19089 / CIP 103742 / CB 15) (Caulobacter crescentus).